The chain runs to 592 residues: MRRCKNNTDKFSVITMRLLTLLLICTFFFFFSFAYSAESDNETDSVVTREINGTVVESNATSAKPREDSFADMIDRALEKEFPDNDQNEVPDPGSFNNSVADQQAVLETVARVKPKKNETKTKEEKSFFNLDNENGVEDTPRLIDRKDNVFIMSNPKSKYPVLQLDLRLISDLVVVIVSATCGGIAFACAGQPVITGYLLAGSIIGPGGLSFVSEMVQVETVAQFGVIFLLFALGLEFSAAKLRVVRAVAIPGGLLQIFLFMCLSGITASLCGGKLTEGIFVGAFLSMSSTAVVLKFLMERNSISALHGQITVGTLILQDCAVGLLFALLPVLGGTSGVLQGVLSMAKSLAILIAFLGALFVLSRTWVPWFLKLMTSLSSQTNELYQLAAVAFCLLVAWCSDKLGLSLELGSFAAGVMISTTDLAQHTLEQVEPIRNFFAALFLASIGMLIHMHFLWNHVDILLAAVLLVIVIKTVVVAIVVKVFGYNNKTAVLVGMSLAQIGEFAFVLLSRASNLHLIESKLYLLLLGTTALSLVTTPLLFKLIPAVVHLGVLLRWFSPDSSTEIGFKGELYHSESAKRISLMIQGSLHDS.

Positions 1 to 35 (MRRCKNNTDKFSVITMRLLTLLLICTFFFFFSFAY) are cleaved as a signal peptide. Helical transmembrane passes span 169–189 (LISD…AFAC), 193–213 (PVIT…LSFV), 221–241 (TVAQ…FSAA), 248–268 (AVAI…SGIT), 279–299 (GIFV…KFLM), 313–333 (VGTL…LPVL), 343–363 (VLSM…LFVL), 388–408 (LAAV…GLSL), 437–457 (NFFA…HFLW), 462–482 (ILLA…AIVV), 491–511 (TAVL…VLLS), and 535–555 (LVTT…GVLL).

Belongs to the monovalent cation:proton antiporter 2 (CPA2) transporter (TC 2.A.37) family. KEA (TC 2.A.37.1) subfamily. Expressed in roots, stems, leaves, flowers and silique.

It is found in the golgi apparatus membrane. Its subcellular location is the golgi apparatus. The protein resides in the trans-Golgi network membrane. The protein localises to the prevacuolar compartment membrane. It localises to the endomembrane system. It carries out the reaction K(+)(in) + H(+)(out) = K(+)(out) + H(+)(in). Electroneutral K(+)/H(+) efflux antiporter involved in K(+) homeostasis and osmotic adjustment. Together with KEA5 and KEA6, promotes growth and development, and facilitates endosomal pH and ions homeostasis, as well as salt tolerance (e.g. K(+), NaCl and LiCl), probably by supporting cell wall biosynthesis during rapid etiolated seedling growth. This Arabidopsis thaliana (Mouse-ear cress) protein is K(+) efflux antiporter 4.